Reading from the N-terminus, the 481-residue chain is Aspartyl/glutamyl-tRNA(Asn/Gln) amidotransferase subunit B (481 aa).

Belongs to the GatB/GatE family. GatB subfamily. In terms of assembly, heterotrimer of A, B and C subunits.

The enzyme catalyses L-glutamyl-tRNA(Gln) + L-glutamine + ATP + H2O = L-glutaminyl-tRNA(Gln) + L-glutamate + ADP + phosphate + H(+). It carries out the reaction L-aspartyl-tRNA(Asn) + L-glutamine + ATP + H2O = L-asparaginyl-tRNA(Asn) + L-glutamate + ADP + phosphate + 2 H(+). Allows the formation of correctly charged Asn-tRNA(Asn) or Gln-tRNA(Gln) through the transamidation of misacylated Asp-tRNA(Asn) or Glu-tRNA(Gln) in organisms which lack either or both of asparaginyl-tRNA or glutaminyl-tRNA synthetases. The reaction takes place in the presence of glutamine and ATP through an activated phospho-Asp-tRNA(Asn) or phospho-Glu-tRNA(Gln). The sequence is that of Aspartyl/glutamyl-tRNA(Asn/Gln) amidotransferase subunit B from Pseudomonas entomophila (strain L48).